Reading from the N-terminus, the 199-residue chain is Recombination protein RecR (199 aa).

Residues cysteine 56–cysteine 71 form a C4-type zinc finger. The 96-residue stretch at glutamate 79 to proline 174 folds into the Toprim domain.

This sequence belongs to the RecR family.

Functionally, may play a role in DNA repair. It seems to be involved in an RecBC-independent recombinational process of DNA repair. It may act with RecF and RecO. The chain is Recombination protein RecR from Dechloromonas aromatica (strain RCB).